The sequence spans 576 residues: 9-cis-epoxycarotenoid dioxygenase NCED2, chloroplastic (576 aa).

Residues 1 to 34 constitute a chloroplast transit peptide; it reads MEVPIAAMTFAHPANVMTLASRQPKSKRSHISPA. 4 residues coordinate Fe cation: histidine 270, histidine 319, histidine 385, and histidine 563.

It belongs to the carotenoid oxygenase family. Requires Fe(2+) as cofactor.

Its subcellular location is the plastid. It localises to the chloroplast. The catalysed reaction is a 9-cis-epoxycarotenoid + O2 = a 12'-apo-carotenal + 2-cis,4-trans-xanthoxin. The enzyme catalyses 9-cis-violaxanthin + O2 = (3S,5R,6S)-5,6-epoxy-3-hydroxy-5,6-dihydro-12'-apo-beta-caroten-12'-al + 2-cis,4-trans-xanthoxin. It catalyses the reaction 9'-cis-neoxanthin + O2 = (3S,5R,6R)-3,5-dihydroxy-6,7-didehydro-5,6-dihydro-12'-apo-beta-caroten-12'-al + 2-cis,4-trans-xanthoxin. Its function is as follows. Has a 11,12(11',12') 9-cis epoxycarotenoid cleavage activity. Catalyzes the first step of abscisic-acid biosynthesis from carotenoids. The chain is 9-cis-epoxycarotenoid dioxygenase NCED2, chloroplastic from Oryza sativa subsp. japonica (Rice).